A 221-amino-acid polypeptide reads, in one-letter code: Eukaryotic translation initiation factor 4E-2 (221 aa).

The span at 1–20 shows a compositional bias: basic and acidic residues; the sequence is MADELNKAALEEYKSSSVED. Residues 1 to 36 form a disordered region; that stretch reads MADELNKAALEEYKSSSVEDRGEEGEIVGESDDTAS. Acidic residues predominate over residues 21–33; that stretch reads RGEEGEIVGESDD. 2 EIF4G-binding regions span residues 46–49 and 56–92; these read HPLE and FDNP…NNIH. Residues 64–69, Lys-96, and 114–115 contribute to the mRNA site; these read KQAAWG and WE. An intrachain disulfide couples Cys-119 to Cys-157. The segment at 140-149 is EIF4G-binding; the sequence is YTLLALIGEQ. MRNA is bound by residues 164 to 169 and 209 to 213; these read RVRQEK and KKLDR.

It belongs to the eukaryotic initiation factor 4E family. As to quaternary structure, EIF4F is a multi-subunit complex, the composition of which varies with external and internal environmental conditions. It is composed of at least EIF4A, EIF4E and EIF4G. EIF4E is also known to interact with other partners. In higher plants two isoforms of EIF4F have been identified, named isoform EIF4F and isoform EIF(iso)4F. Isoform EIF4F has subunits p220 and p26, whereas isoform EIF(iso)4F has subunits p82 and p28. In terms of assembly, (Microbial infection) Interacts with potyvirus viral genome-linked protein (VPg) in the nucleus; mostly potato virus Y (PVY-LYE84) and tobacco etch virus (TEV-HAT) VPg, but not with PVY-LYE90 and pepper mottle virus (PepMoV) VPg; these interactions are possible in susceptible hosts but impaired in resistant plants. Post-translationally, according to the redox status, the Cys-119-Cys-157 disulfide bridge may have a role in regulating protein function by affecting its ability to bind capped mRNA.

The protein resides in the nucleus. Its subcellular location is the cytoplasm. Its function is as follows. Component of the protein complex eIF4F, which is involved in the recognition of the mRNA cap, ATP-dependent unwinding of 5'-terminal secondary structure and recruitment of mRNA to the ribosome. Recognizes and binds the 7-methylguanosine-containing mRNA cap during an early step in the initiation of protein synthesis and facilitates ribosome binding by inducing the unwinding of the mRNAs secondary structures. Key component of recessive resistance to potyviruses. In terms of biological role, (Microbial infection) Susceptibility host factor required for viral infection (e.g. potato virus Y (PVY) and tobacco etch virus (TEV)) by recruiting viral RNAs to the host ribosomal complex via an interaction with viral genome-linked protein (VPg). This Solanum lycopersicum (Tomato) protein is Eukaryotic translation initiation factor 4E-2.